Here is a 468-residue protein sequence, read N- to C-terminus: ATP synthase subunit beta (468 aa).

Residue 155–162 (GGAGVGKT) coordinates ATP.

It belongs to the ATPase alpha/beta chains family. F-type ATPases have 2 components, CF(1) - the catalytic core - and CF(0) - the membrane proton channel. CF(1) has five subunits: alpha(3), beta(3), gamma(1), delta(1), epsilon(1). CF(0) has three main subunits: a(1), b(2) and c(9-12). The alpha and beta chains form an alternating ring which encloses part of the gamma chain. CF(1) is attached to CF(0) by a central stalk formed by the gamma and epsilon chains, while a peripheral stalk is formed by the delta and b chains.

It localises to the cell membrane. The enzyme catalyses ATP + H2O + 4 H(+)(in) = ADP + phosphate + 5 H(+)(out). Produces ATP from ADP in the presence of a proton gradient across the membrane. The catalytic sites are hosted primarily by the beta subunits. This Streptococcus pneumoniae (strain Taiwan19F-14) protein is ATP synthase subunit beta.